The primary structure comprises 380 residues: Succinyl-diaminopimelate desuccinylase (380 aa).

Zn(2+) is bound at residue His-70. Asp-72 is a catalytic residue. Asp-104 is a binding site for Zn(2+). Glu-138 functions as the Proton acceptor in the catalytic mechanism. Residues Glu-139, Glu-167, and His-353 each coordinate Zn(2+).

It belongs to the peptidase M20A family. DapE subfamily. In terms of assembly, homodimer. The cofactor is Zn(2+). Co(2+) is required as a cofactor.

The catalysed reaction is N-succinyl-(2S,6S)-2,6-diaminopimelate + H2O = (2S,6S)-2,6-diaminopimelate + succinate. Its pathway is amino-acid biosynthesis; L-lysine biosynthesis via DAP pathway; LL-2,6-diaminopimelate from (S)-tetrahydrodipicolinate (succinylase route): step 3/3. In terms of biological role, catalyzes the hydrolysis of N-succinyl-L,L-diaminopimelic acid (SDAP), forming succinate and LL-2,6-diaminopimelate (DAP), an intermediate involved in the bacterial biosynthesis of lysine and meso-diaminopimelic acid, an essential component of bacterial cell walls. The chain is Succinyl-diaminopimelate desuccinylase from Ectopseudomonas mendocina (strain ymp) (Pseudomonas mendocina).